The sequence spans 1434 residues: DNA-directed RNA polymerase subunit beta (1434 aa).

Belongs to the RNA polymerase beta chain family. The RNAP catalytic core consists of 2 alpha, 1 beta, 1 beta' and 1 omega subunit. When a sigma factor is associated with the core the holoenzyme is formed, which can initiate transcription.

The enzyme catalyses RNA(n) + a ribonucleoside 5'-triphosphate = RNA(n+1) + diphosphate. Its function is as follows. DNA-dependent RNA polymerase catalyzes the transcription of DNA into RNA using the four ribonucleoside triphosphates as substrates. The sequence is that of DNA-directed RNA polymerase subunit beta from Ureaplasma urealyticum serovar 10 (strain ATCC 33699 / Western).